The sequence spans 219 residues: 7-cyano-7-deazaguanine synthase (219 aa).

9-19 serves as a coordination point for ATP; the sequence is YSGGMDSFTVL. Positions 185, 193, 196, and 199 each coordinate Zn(2+).

Belongs to the QueC family. The cofactor is Zn(2+).

It carries out the reaction 7-carboxy-7-deazaguanine + NH4(+) + ATP = 7-cyano-7-deazaguanine + ADP + phosphate + H2O + H(+). The protein operates within purine metabolism; 7-cyano-7-deazaguanine biosynthesis. Its function is as follows. Catalyzes the ATP-dependent conversion of 7-carboxy-7-deazaguanine (CDG) to 7-cyano-7-deazaguanine (preQ(0)). In Marinomonas sp. (strain MWYL1), this protein is 7-cyano-7-deazaguanine synthase.